Here is a 142-residue protein sequence, read N- to C-terminus: Large ribosomal subunit protein cL37 alpha (142 aa).

The N-terminal 62 residues, 1-62, are a transit peptide targeting the chloroplast; the sequence is MALLSPLLSL…AQKRGTVVAM (62 aa). Residues 123–142 form a disordered region; it reads RKLRKRGAWPPSKMKKLKNV.

The protein belongs to the chloroplast-specific ribosomal protein cL37 family. As to quaternary structure, component of the chloroplast large ribosomal subunit (LSU). Mature 70S chloroplast ribosomes of higher plants consist of a small (30S) and a large (50S) subunit. The 30S small subunit contains 1 molecule of ribosomal RNA (16S rRNA) and 24 different proteins. The 50S large subunit contains 3 rRNA molecules (23S, 5S and 4.5S rRNA) and 33 different proteins.

The protein localises to the plastid. The protein resides in the chloroplast. In terms of biological role, component of the chloroplast ribosome (chloro-ribosome), a dedicated translation machinery responsible for the synthesis of chloroplast genome-encoded proteins, including proteins of the transcription and translation machinery and components of the photosynthetic apparatus. The protein is Large ribosomal subunit protein cL37 alpha (PSRP5) of Spinacia oleracea (Spinach).